The primary structure comprises 364 residues: MLPIAKLEAVQRRFQELEHLMCSPAVLAAPAELQRLNRERTEIEPVVVAFARMRDVERRIAEDREALSDPDLSELAQAELPELELERERLAAELEVLLLPKDPNDTRNTVIEIRSGEGGEEAALFAADLFRMLCRYAETKRWKVEVLNLSEASAGGYKEVAALITGQDVYSHLRYEGGVHRVQRVPSTETQGRIHTSTATVAVLPEADEVDVHIDEKDLEISIAASGGPGGQGVNTTNSAVQIKHLPTGMIVKCQDERSQLKNKAKAMKVLRSRLLELEQRRQEEAQSAERRTMVGTGERAQKVRTYNFPQNRVTDHRIGLTLHKLDKIIEGDLEELIGALRTHRQAELLRRGGLSGPALEPAT.

Position 232 is an N5-methylglutamine (Q232).

This sequence belongs to the prokaryotic/mitochondrial release factor family. Post-translationally, methylated by PrmC. Methylation increases the termination efficiency of RF1.

Its subcellular location is the cytoplasm. Peptide chain release factor 1 directs the termination of translation in response to the peptide chain termination codons UAG and UAA. The chain is Peptide chain release factor 1 from Sorangium cellulosum (strain So ce56) (Polyangium cellulosum (strain So ce56)).